Reading from the N-terminus, the 206-residue chain is Protein GrpE (206 aa).

The disordered stretch occupies residues 1-64 (MSKKASMHKE…KALEEAQQQA (64 aa)). Over residues 46–58 (SDAKVQELEKALE) the composition is skewed to basic and acidic residues.

It belongs to the GrpE family. As to quaternary structure, homodimer.

Its subcellular location is the cytoplasm. Functionally, participates actively in the response to hyperosmotic and heat shock by preventing the aggregation of stress-denatured proteins, in association with DnaK and GrpE. It is the nucleotide exchange factor for DnaK and may function as a thermosensor. Unfolded proteins bind initially to DnaJ; upon interaction with the DnaJ-bound protein, DnaK hydrolyzes its bound ATP, resulting in the formation of a stable complex. GrpE releases ADP from DnaK; ATP binding to DnaK triggers the release of the substrate protein, thus completing the reaction cycle. Several rounds of ATP-dependent interactions between DnaJ, DnaK and GrpE are required for fully efficient folding. This is Protein GrpE from Prosthecochloris aestuarii (strain DSM 271 / SK 413).